The chain runs to 347 residues: NADH-ubiquinone oxidoreductase chain 2 (347 aa).

11 consecutive transmembrane segments (helical) span residues Pro3–Ser23, His25–Met45, Tyr59–Leu79, Ile96–Pro116, Ile122–Leu142, Ile149–Gly169, Ile178–Pro198, Met201–Leu221, Ala237–Leu257, Glu274–Met294, and Thr323–Ile343.

This sequence belongs to the complex I subunit 2 family. Core subunit of respiratory chain NADH dehydrogenase (Complex I) which is composed of 45 different subunits. Interacts with TMEM242.

The protein resides in the mitochondrion inner membrane. The catalysed reaction is a ubiquinone + NADH + 5 H(+)(in) = a ubiquinol + NAD(+) + 4 H(+)(out). In terms of biological role, core subunit of the mitochondrial membrane respiratory chain NADH dehydrogenase (Complex I) which catalyzes electron transfer from NADH through the respiratory chain, using ubiquinone as an electron acceptor. Essential for the catalytic activity and assembly of complex I. This chain is NADH-ubiquinone oxidoreductase chain 2, found in Viverra tangalunga (Malayan civet).